The primary structure comprises 454 residues: UDP-N-acetylmuramoylalanine--D-glutamate ligase (454 aa).

118 to 124 provides a ligand contact to ATP; it reads GTNGKTT.

It belongs to the MurCDEF family.

The protein localises to the cytoplasm. The catalysed reaction is UDP-N-acetyl-alpha-D-muramoyl-L-alanine + D-glutamate + ATP = UDP-N-acetyl-alpha-D-muramoyl-L-alanyl-D-glutamate + ADP + phosphate + H(+). It participates in cell wall biogenesis; peptidoglycan biosynthesis. Functionally, cell wall formation. Catalyzes the addition of glutamate to the nucleotide precursor UDP-N-acetylmuramoyl-L-alanine (UMA). This is UDP-N-acetylmuramoylalanine--D-glutamate ligase from Thermosynechococcus vestitus (strain NIES-2133 / IAM M-273 / BP-1).